A 139-amino-acid chain; its full sequence is Holo-[acyl-carrier-protein] synthase (139 aa).

2 residues coordinate Mg(2+): Asp-9 and Glu-63.

Belongs to the P-Pant transferase superfamily. AcpS family. The cofactor is Mg(2+).

Its subcellular location is the cytoplasm. It catalyses the reaction apo-[ACP] + CoA = holo-[ACP] + adenosine 3',5'-bisphosphate + H(+). Its function is as follows. Transfers the 4'-phosphopantetheine moiety from coenzyme A to a Ser of acyl-carrier-protein. The chain is Holo-[acyl-carrier-protein] synthase from Wigglesworthia glossinidia brevipalpis.